We begin with the raw amino-acid sequence, 98 residues long: Aspartyl/glutamyl-tRNA(Asn/Gln) amidotransferase subunit C (98 aa).

Belongs to the GatC family. As to quaternary structure, heterotrimer of A, B and C subunits.

The catalysed reaction is L-glutamyl-tRNA(Gln) + L-glutamine + ATP + H2O = L-glutaminyl-tRNA(Gln) + L-glutamate + ADP + phosphate + H(+). The enzyme catalyses L-aspartyl-tRNA(Asn) + L-glutamine + ATP + H2O = L-asparaginyl-tRNA(Asn) + L-glutamate + ADP + phosphate + 2 H(+). Allows the formation of correctly charged Asn-tRNA(Asn) or Gln-tRNA(Gln) through the transamidation of misacylated Asp-tRNA(Asn) or Glu-tRNA(Gln) in organisms which lack either or both of asparaginyl-tRNA or glutaminyl-tRNA synthetases. The reaction takes place in the presence of glutamine and ATP through an activated phospho-Asp-tRNA(Asn) or phospho-Glu-tRNA(Gln). The chain is Aspartyl/glutamyl-tRNA(Asn/Gln) amidotransferase subunit C from Paenarthrobacter aurescens (strain TC1).